A 444-amino-acid polypeptide reads, in one-letter code: ATP-dependent protease ATPase subunit HslU (444 aa).

Residues isoleucine 18, 60–65 (GVGKTE), aspartate 256, glutamate 322, and arginine 394 each bind ATP.

This sequence belongs to the ClpX chaperone family. HslU subfamily. In terms of assembly, a double ring-shaped homohexamer of HslV is capped on each side by a ring-shaped HslU homohexamer. The assembly of the HslU/HslV complex is dependent on binding of ATP.

It localises to the cytoplasm. Functionally, ATPase subunit of a proteasome-like degradation complex; this subunit has chaperone activity. The binding of ATP and its subsequent hydrolysis by HslU are essential for unfolding of protein substrates subsequently hydrolyzed by HslV. HslU recognizes the N-terminal part of its protein substrates and unfolds these before they are guided to HslV for hydrolysis. The chain is ATP-dependent protease ATPase subunit HslU from Serratia proteamaculans (strain 568).